We begin with the raw amino-acid sequence, 210 residues long: NAD(P)H-quinone oxidoreductase subunit I (210 aa).

4Fe-4S ferredoxin-type domains follow at residues 54–83 (GRIHFEFDKCIACEICVRVCPIDLPVVDWA) and 94–123 (YSYSIDFGVCIFCANCVEFCPTNCLSVTED). [4Fe-4S] cluster contacts are provided by C63, C66, C69, C73, C103, C106, C109, and C113.

It belongs to the complex I 23 kDa subunit family. NDH-1 is composed of at least 11 different subunits. Requires [4Fe-4S] cluster as cofactor.

It localises to the cellular thylakoid membrane. The enzyme catalyses a plastoquinone + NADH + (n+1) H(+)(in) = a plastoquinol + NAD(+) + n H(+)(out). It carries out the reaction a plastoquinone + NADPH + (n+1) H(+)(in) = a plastoquinol + NADP(+) + n H(+)(out). Functionally, NDH-1 shuttles electrons from an unknown electron donor, via FMN and iron-sulfur (Fe-S) centers, to quinones in the respiratory and/or the photosynthetic chain. The immediate electron acceptor for the enzyme in this species is believed to be plastoquinone. Couples the redox reaction to proton translocation, and thus conserves the redox energy in a proton gradient. The protein is NAD(P)H-quinone oxidoreductase subunit I of Synechococcus sp. (strain JA-2-3B'a(2-13)) (Cyanobacteria bacterium Yellowstone B-Prime).